A 628-amino-acid polypeptide reads, in one-letter code: Voltage-gated potassium channel KCNC4 (628 aa).

2 disordered regions span residues 1–24 (MISS…SKTC) and 62–88 (LAWL…GSSG). The segment at 1 to 28 (MISSVCVSSYRGRKSGNKPPSKTCLKEE) is inactivation gate. Over 1–230 (MISSVCVSSY…EDPYSSRAAR (230 aa)) the chain is Cytoplasmic. Phosphoserine occurs at positions 8, 9, 15, and 21. A compositionally biased stretch (gly residues) spans 77 to 88 (DGGGAGSSGSSG). Zn(2+)-binding residues include His-120, Cys-126, Cys-147, and Cys-148. A helical transmembrane segment spans residues 231–251 (VVAFASLFFILVSITTFCLET). 2 N-linked (GlcNAc...) asparagine glycosylation sites follow: Asn-260 and Asn-269. A helical transmembrane segment spans residues 282-302 (EPILTYIEGVCVMWFTLEFLV). At 303–316 (RIVCCPDTLDFVKN) the chain is on the cytoplasmic side. The helical transmembrane segment at 317-337 (LLNIIDFVAILPFYLEVGLSG) threads the bilayer. Residues 349 to 368 (FLRVVRFVRILRIFKLTRHF) traverse the membrane as a helical; Voltage-sensor segment. The Cytoplasmic segment spans residues 369 to 384 (VGLRVLGHTLRASTNE). Residues 385–405 (FLLLIIFLALGVLIFATMIYY) form a helical membrane-spanning segment. 4 residues coordinate K(+): Thr-440, Leu-441, Gly-442, and Tyr-443. The Selectivity filter motif lies at 440–445 (TLGYGD). Residues 456 to 476 (VGALCALAGVLTIAMPVPVIV) form a helical membrane-spanning segment. The Cytoplasmic portion of the chain corresponds to 477–628 (NNFGMYYSLA…CVPVSHTCAL (152 aa)). A disordered region spans residues 493–584 (PKKRKKHVPR…RRALRRSGTR (92 aa)). Residues 531-546 (AREEGVVERKRADSKQ) are compositionally biased toward basic and acidic residues.

This sequence belongs to the potassium channel family. C (Shaw) (TC 1.A.1.2) subfamily. Kv3.4/KCNC4 sub-subfamily. In terms of assembly, homotetramer. Heterotetramer of potassium channel proteins. In terms of processing, phosphorylation of serine residues in the inactivation gate inhibits rapid channel closure.

It localises to the membrane. It catalyses the reaction K(+)(in) = K(+)(out). Functionally, voltage-gated potassium channel that opens in response to the voltage difference across the membrane, forming a potassium-selective channel through which potassium ions pass in accordance with their electrochemical gradient. The channel displays rapid activation and inactivation kinetics. This Mus musculus (Mouse) protein is Voltage-gated potassium channel KCNC4.